Reading from the N-terminus, the 666-residue chain is Probable potassium transport system protein Kup (666 aa).

12 helical membrane passes run 16–36 (GFIIALGIVYGDIGTSPLYTM), 58–78 (ISLIIWTLTLITTIKYVLVAL), 99–119 (TPWLIVPAVIGGATLLSDGAL), 141–161 (IFQNQSNVIFATLFILLLLFA), 167–187 (TGVIGKLFGPIMFIWFAFLGI), 221–241 (IFILGSIFLATTGAEALYSDL), 253–273 (WPFVKVAIILSYCGQGAWILA), 292–312 (FTMHVVILATLAAIIASQALI), 343–363 (TYIPVINWFLFAITTSIVLLF), 373–393 (YGLAITITMLMTTILLSFFLI), 402–422 (VLLMMIFFGILEGIFFLASAV), and 424–444 (FMHGGYVVVIIAVAIIFIMII).

This sequence belongs to the HAK/KUP transporter (TC 2.A.72) family.

The protein localises to the cell membrane. The enzyme catalyses K(+)(in) + H(+)(in) = K(+)(out) + H(+)(out). Transport of potassium into the cell. Likely operates as a K(+):H(+) symporter. This chain is Probable potassium transport system protein Kup, found in Streptococcus agalactiae serotype III (strain NEM316).